Here is a 350-residue protein sequence, read N- to C-terminus: Protein-arginine kinase (350 aa).

The region spanning 21 to 253 is the Phosphagen kinase C-terminal domain; sequence IVISSRIRLA…VRLADQEREA (233 aa). ATP contacts are provided by residues 24–28, H90, R124, 175–179, and 206–211; these read SSRIR, RASTM, and RGLYGE. An RDXXRA motif of the pArg binding pocket involved in allosteric regulation motif is present at residues 336 to 341; it reads RDVHRA.

This sequence belongs to the ATP:guanido phosphotransferase family.

It catalyses the reaction L-arginyl-[protein] + ATP = N(omega)-phospho-L-arginyl-[protein] + ADP + H(+). Its activity is regulated as follows. Appears to be allosterically activated by the binding of pArg-containing polypeptides to the pArg-binding pocket localized in the C-terminal domain of McsB. Catalyzes the specific phosphorylation of arginine residues in proteins. This is Protein-arginine kinase from Moorella thermoacetica (strain ATCC 39073 / JCM 9320).